Reading from the N-terminus, the 366-residue chain is Chorismate synthase (366 aa).

The NADP(+) site is built by R48 and R54. FMN contacts are provided by residues 132 to 134 (RSS), 244 to 245 (NA), G289, 304 to 308 (KPTSS), and R330.

The protein belongs to the chorismate synthase family. In terms of assembly, homotetramer. Requires FMNH2 as cofactor.

It carries out the reaction 5-O-(1-carboxyvinyl)-3-phosphoshikimate = chorismate + phosphate. It participates in metabolic intermediate biosynthesis; chorismate biosynthesis; chorismate from D-erythrose 4-phosphate and phosphoenolpyruvate: step 7/7. In terms of biological role, catalyzes the anti-1,4-elimination of the C-3 phosphate and the C-6 proR hydrogen from 5-enolpyruvylshikimate-3-phosphate (EPSP) to yield chorismate, which is the branch point compound that serves as the starting substrate for the three terminal pathways of aromatic amino acid biosynthesis. This reaction introduces a second double bond into the aromatic ring system. In Methylobacterium radiotolerans (strain ATCC 27329 / DSM 1819 / JCM 2831 / NBRC 15690 / NCIMB 10815 / 0-1), this protein is Chorismate synthase.